The following is a 204-amino-acid chain: Tat proofreading chaperone DmsD (204 aa).

Belongs to the TorD/DmsD family. DmsD subfamily.

Its function is as follows. Required for biogenesis/assembly of DMSO reductase, but not for the interaction of the DmsA signal peptide with the Tat system. May be part of a chaperone cascade complex that facilitates a folding-maturation pathway for the substrate protein. The protein is Tat proofreading chaperone DmsD of Escherichia coli O157:H7.